The chain runs to 715 residues: Eukaryotic peptide chain release factor GTP-binding subunit (715 aa).

Residues 1-12 show a composition bias toward polar residues; it reads MANASLNGDQSK. 2 disordered regions span residues 1-148 and 168-262; these read MANA…SLNK and ATKK…SNSA. The tract at residues 5-128 is several sort of repeats; it reads SLNGDQSKQQ…PQQQQQQQSQ (124 aa). Residues 13-25 are compositionally biased toward low complexity; the sequence is QQQQQQQQQQQQQ. Polar residues predominate over residues 26–37; the sequence is NYYNPNAAQSFV. Low complexity-rich tracts occupy residues 39–129 and 176–198; these read QGGY…QSQG and SKPQ…ASAP. The segment at 129–285 is charged; the sequence is GMSLADFQKQ…DEIDEEVVKD (157 aa). 2 stretches are compositionally biased toward basic and acidic residues: residues 199–208 and 218–233; these read QEEKKEEKEA and ETKK…KKEA. The tr-type G domain maps to 290-515; it reads KDHVSIIFMG…YLDNMDTMNR (226 aa). The G1 stretch occupies residues 299-306; sequence GHVDAGKS. Residue 299 to 306 coordinates GTP; sequence GHVDAGKS. The segment at 355-359 is G2; sequence GKTIE. Residue threonine 373 is modified to Phosphothreonine. The tract at residues 376-379 is G3; that stretch reads DAPG. Residues 376-380 and 438-441 each bind GTP; these read DAPGH and NKMD. The tract at residues 438 to 441 is G4; that stretch reads NKMD. The interval 479–481 is G5; it reads SGY.

Belongs to the TRAFAC class translation factor GTPase superfamily. Classic translation factor GTPase family. ERF3 subfamily.

The protein localises to the cytoplasm. Involved in translation termination. Stimulates the activity of ERF1. Binds guanine nucleotides. This Candida albicans (Yeast) protein is Eukaryotic peptide chain release factor GTP-binding subunit (SUP35).